The primary structure comprises 418 residues: Secreted aspartic protease 5 (418 aa).

Positions 1–18 (MFLKNILSVLAFALLIDA) are cleaved as a signal peptide. A propeptide spans 19–76 (APVKRSPGFVTLDFNVKRSLVDPDDPTVEAKRSPLFLEFTPSEFPVDETGRDGDVDKR) (activation peptide). The region spanning 90-404 (YTADITVGSD…NLDDKKISMA (315 aa)) is the Peptidase A1 domain. Aspartate 108 is an active-site residue. Pepstatin A is bound at residue 108–110 (DTG). Cysteine 123 and cysteine 135 are disulfide-bonded. Residue 161-162 (GD) coordinates pepstatin A. A Zn(2+)-binding site is contributed by glutamate 268. Residue aspartate 294 is part of the active site. 294-298 (DSGTT) provides a ligand contact to pepstatin A. A disulfide bridge connects residues cysteine 332 and cysteine 370.

Belongs to the peptidase A1 family.

Its subcellular location is the secreted. The catalysed reaction is Preferential cleavage at the carboxyl of hydrophobic amino acids, but fails to cleave 15-Leu-|-Tyr-16, 16-Tyr-|-Leu-17 and 24-Phe-|-Phe-25 of insulin B chain. Activates trypsinogen, and degrades keratin.. With respect to regulation, inhibited by pepstatin A analogs. In terms of biological role, secreted aspartic peptidases (SAPs) are a group of ten acidic hydrolases considered as key virulence factors. These enzymes supply the fungus with nutrient amino acids as well as are able to degrade the selected host's proteins involved in the immune defense. Moreover, acts toward human hemoglobin though limited proteolysis to generate a variety of antimicrobial hemocidins, enabling to compete with the other microorganisms of the same physiological niche using the microbicidal peptides generated from the host protein. This is Secreted aspartic protease 5 from Candida albicans (strain SC5314 / ATCC MYA-2876) (Yeast).